A 273-amino-acid chain; its full sequence is Large ribosomal subunit protein uL2 (273 aa).

Residues 213–261 (WLGKRPQSRGVAMNPVDHPHGGGEGKSSGGRHPVTPWGVPTKGYKTRVN) are disordered.

It belongs to the universal ribosomal protein uL2 family. As to quaternary structure, part of the 50S ribosomal subunit. Forms a bridge to the 30S subunit in the 70S ribosome.

One of the primary rRNA binding proteins. Required for association of the 30S and 50S subunits to form the 70S ribosome, for tRNA binding and peptide bond formation. It has been suggested to have peptidyltransferase activity; this is somewhat controversial. Makes several contacts with the 16S rRNA in the 70S ribosome. The sequence is that of Large ribosomal subunit protein uL2 from Syntrophotalea carbinolica (strain DSM 2380 / NBRC 103641 / GraBd1) (Pelobacter carbinolicus).